A 598-amino-acid chain; its full sequence is Arylsulfate sulfotransferase AssT (598 aa).

Residues 1–27 (MFHPYRKTLLSGTVALALGLFATGAIA) form the signal peptide. 4-methylumbelliferone-binding residues include H279 and H383. A disulfide bridge connects residues C445 and C451. A 4-methylumbelliferone-binding site is contributed by H463. H463 serves as the catalytic Nucleophile; sulfurylated histidine covalent intermediate.

This sequence belongs to the aryl sulfotransferase family. In terms of assembly, monomer.

Its subcellular location is the periplasm. The catalysed reaction is an aryl sulfate + a phenol = an aryl sulfate + a phenol. It catalyses the reaction 4-methylumbelliferone sulfate + phenol = phenyl sulfate + 4-methylumbelliferone. The enzyme catalyses 2-naphthyl sulfate + phenol = phenyl sulfate + 2-naphthol. Functionally, catalyzes the transfer of a sulfate group from a phenyl sulfate ester to other phenolic compounds. Is able to use several substrate donors and acceptors in vitro: using phenol as an acceptor substrate, 4-methylumbelliferyl sulfate is the best donor substrate, followed by beta-naphthyl sulfate, p-nitrophenyl sulfate (PNS), and alpha-naphthyl sulfate; using PNS as a donor substrate, alpha-naphthol is the best acceptor substrate, followed by phenol, resorcinol, p-acetaminophen, tyramine, and tyrosine. Cannot use 3'-phosphoadenosine-5'-phophosulfate (PAPS), the donor substrate of mammalian sulfotransferase. May be a detoxifying enzyme, converting toxic phenolic compounds into non-toxic materials. In Lelliottia amnigena (Enterobacter amnigenus), this protein is Arylsulfate sulfotransferase AssT.